We begin with the raw amino-acid sequence, 674 residues long: Methionine--tRNA ligase (674 aa).

The 'HIGH' region motif lies at 11-21; that stretch reads PYANGDLHLGH. Positions 142, 145, 155, and 158 each coordinate Zn(2+). Positions 330-334 match the 'KMSKS' region motif; that stretch reads KMSKS. Residue lysine 333 participates in ATP binding. In terms of domain architecture, tRNA-binding spans 574 to 674; the sequence is DFMKVDLRIA…EGAQPGMRVK (101 aa).

It belongs to the class-I aminoacyl-tRNA synthetase family. MetG type 1 subfamily. Homodimer. Zn(2+) is required as a cofactor.

The protein resides in the cytoplasm. The catalysed reaction is tRNA(Met) + L-methionine + ATP = L-methionyl-tRNA(Met) + AMP + diphosphate. Functionally, is required not only for elongation of protein synthesis but also for the initiation of all mRNA translation through initiator tRNA(fMet) aminoacylation. The polypeptide is Methionine--tRNA ligase (Francisella tularensis subsp. holarctica (strain OSU18)).